A 476-amino-acid chain; its full sequence is Proton-coupled amino acid transporter 1 (476 aa).

Residues 1–15 are compositionally biased toward basic and acidic residues; that stretch reads MSTQRLRNEDYHDYS. Residues 1-32 are disordered; it reads MSTQRLRNEDYHDYSSTDVSPEESPSEGLNNL. Over 1–51 the chain is Cytoplasmic; sequence MSTQRLRNEDYHDYSSTDVSPEESPSEGLNNLSSPGSYQRFGQSNSTTWFQ. The helical transmembrane segment at 52 to 72 threads the bilayer; the sequence is TLIHLLKGNIGTGLLGLPLAV. Residues 73 to 78 are Extracellular-facing; it reads KNAGIV. The chain crosses the membrane as a helical span at residues 79-99; that stretch reads MGPISLLIIGIVAVHCMGILV. Topologically, residues 100-141 are cytoplasmic; the sequence is KCAHHFCRRLNKSFVDYGDTVMYGLESSPCSWLRNHAHWGRR. The helical transmembrane segment at 142–162 threads the bilayer; sequence VVDFFLIVTQLGFCCVYFVFL. Over 163 to 190 the chain is Extracellular; the sequence is ADNFKQVIEAANGTTNNCHNNETVILTP. Residues asparagine 174 and asparagine 183 are each glycosylated (N-linked (GlcNAc...) asparagine). Cysteine 180 and cysteine 329 are disulfide-bonded. A helical membrane pass occupies residues 191-211; that stretch reads TMDSRLYMLSFLPFLVLLVFI. The Cytoplasmic portion of the chain corresponds to 212 to 215; sequence RNLR. The helical transmembrane segment at 216-236 threads the bilayer; it reads ALSIFSLLANITMLVSLVMIY. Over 237–257 the chain is Extracellular; sequence QFIVQRIPDPSHLPLVAPWKT. A helical membrane pass occupies residues 258–278; the sequence is YPLFFGTAIFSFEGIGMVLPL. Topologically, residues 279–289 are cytoplasmic; the sequence is ENKMKDPRKFP. Residues 290–310 form a helical membrane-spanning segment; sequence LILYLGMVIVTILYISLGCLG. Topologically, residues 311–342 are extracellular; the sequence is YLQFGANIQGSITLNLPNCWLYQSVKLLYSIG. A helical membrane pass occupies residues 343-363; it reads IFFTYALQFYVPAEIIIPFFV. Residues 364 to 372 lie on the Cytoplasmic side of the membrane; it reads SRAPEHCEL. Residues 373–393 form a helical membrane-spanning segment; sequence VVDLFVRTVLVCLTCILAILI. Residues 394-397 lie on the Extracellular side of the membrane; it reads PRLD. A helical membrane pass occupies residues 398–418; it reads LVISLVGSVSSSALALIIPPL. The Cytoplasmic segment spans residues 419–439; that stretch reads LEVTTFYSEGMSPLTIFKDAL. A helical transmembrane segment spans residues 440-460; it reads ISILGFVGFVVGTYEALYELI. Residues 461 to 476 lie on the Extracellular side of the membrane; sequence QPSNAPIFINSTCAFI. N-linked (GlcNAc...) asparagine glycosylation occurs at asparagine 470.

It belongs to the amino acid/polyamine transporter 2 family.

The protein resides in the cell membrane. Its subcellular location is the apical cell membrane. It localises to the lysosome membrane. The enzyme catalyses glycine(in) + H(+)(in) = glycine(out) + H(+)(out). It catalyses the reaction L-alanine(in) + H(+)(in) = L-alanine(out) + H(+)(out). It carries out the reaction D-alanine(in) + H(+)(in) = D-alanine(out) + H(+)(out). The catalysed reaction is L-proline(out) + H(+)(out) = L-proline(in) + H(+)(in). The enzyme catalyses D-proline(out) + H(+)(out) = D-proline(in) + H(+)(in). It catalyses the reaction D-serine(out) + H(+)(out) = D-serine(in) + H(+)(in). It carries out the reaction L-serine(in) + H(+)(in) = L-serine(out) + H(+)(out). The catalysed reaction is 4-aminobutanoate(in) + H(+)(in) = 4-aminobutanoate(out) + H(+)(out). The enzyme catalyses beta-alanine(in) + H(+)(in) = beta-alanine(out) + H(+)(out). In terms of biological role, electrogenic proton/amino acid symporter with selectivity for small apolar L-amino acids, their D-enantiomers and selected amino acid derivatives such as 4-aminobutanoate/GABA. May be involved in the efflux from the lysosomal compartment of neutral amino acids resulting from proteolysis. May play a role in specifying sites for exocytosis in neurons. This chain is Proton-coupled amino acid transporter 1, found in Homo sapiens (Human).